The sequence spans 239 residues: Ribonuclease PH (239 aa).

Phosphate contacts are provided by residues arginine 88 and 126 to 128; that span reads GTR.

Belongs to the RNase PH family. As to quaternary structure, homohexameric ring arranged as a trimer of dimers.

The enzyme catalyses tRNA(n+1) + phosphate = tRNA(n) + a ribonucleoside 5'-diphosphate. In terms of biological role, phosphorolytic 3'-5' exoribonuclease that plays an important role in tRNA 3'-end maturation. Removes nucleotide residues following the 3'-CCA terminus of tRNAs; can also add nucleotides to the ends of RNA molecules by using nucleoside diphosphates as substrates, but this may not be physiologically important. Probably plays a role in initiation of 16S rRNA degradation (leading to ribosome degradation) during starvation. In Coxiella burnetii (strain Dugway 5J108-111), this protein is Ribonuclease PH.